The primary structure comprises 196 residues: dTTP/UTP pyrophosphatase (196 aa).

Asp-73 acts as the Proton acceptor in catalysis.

The protein belongs to the Maf family. YhdE subfamily. It depends on a divalent metal cation as a cofactor.

Its subcellular location is the cytoplasm. It catalyses the reaction dTTP + H2O = dTMP + diphosphate + H(+). It carries out the reaction UTP + H2O = UMP + diphosphate + H(+). Functionally, nucleoside triphosphate pyrophosphatase that hydrolyzes dTTP and UTP. May have a dual role in cell division arrest and in preventing the incorporation of modified nucleotides into cellular nucleic acids. This is dTTP/UTP pyrophosphatase from Myxococcus xanthus (strain DK1622).